Consider the following 1234-residue polypeptide: DNA-directed RNA polymerase subunit beta (1234 aa).

Residues Glu1169 to His1234 are disordered. 2 stretches are compositionally biased toward acidic residues: residues Val1171–Val1180 and Glu1191–His1234.

This sequence belongs to the RNA polymerase beta chain family. In terms of assembly, the RNAP catalytic core consists of 2 alpha, 1 beta, 1 beta' and 1 omega subunit. When a sigma factor is associated with the core the holoenzyme is formed, which can initiate transcription.

The enzyme catalyses RNA(n) + a ribonucleoside 5'-triphosphate = RNA(n+1) + diphosphate. Functionally, DNA-dependent RNA polymerase catalyzes the transcription of DNA into RNA using the four ribonucleoside triphosphates as substrates. The polypeptide is DNA-directed RNA polymerase subunit beta (Clostridium botulinum (strain Langeland / NCTC 10281 / Type F)).